A 664-amino-acid polypeptide reads, in one-letter code: ATP-dependent RNA helicase MSS116, mitochondrial (664 aa).

The N-terminal 26 residues, Met-1–Cys-26, are a transit peptide targeting the mitochondrion. The interval Asn-42–Glu-79 is disordered. Over residues Phe-48–Arg-68 the composition is skewed to low complexity. The short motif at Ser-106 to Gln-134 is the Q motif element. A Helicase ATP-binding domain is found at Pro-139–Leu-326. Ala-152–Thr-159 is a binding site for ATP. A DEAD box motif is present at residues Asp-267–Asp-270. The Helicase C-terminal domain occupies Ser-355–Lys-512. Residues Gly-602–Tyr-664 are disordered. Basic and acidic residues predominate over residues Gln-628–Arg-638. Residues Arg-639–Arg-649 are compositionally biased toward low complexity. A compositionally biased stretch (polar residues) spans Lys-653–Tyr-664.

The protein belongs to the DEAD box helicase family. DDX18/HAS1 subfamily.

It is found in the mitochondrion matrix. The enzyme catalyses ATP + H2O = ADP + phosphate + H(+). Functionally, ATP-dependent RNA helicase required for mitochondrial splicing of group I and II introns. Specifically involved in the ATP-dependent splicing of the bl1 intron of COB. Also required for efficient mitochondrial translation. In Saccharomyces cerevisiae (strain ATCC 204508 / S288c) (Baker's yeast), this protein is ATP-dependent RNA helicase MSS116, mitochondrial (MSS116).